Reading from the N-terminus, the 364-residue chain is Flagellar P-ring protein (364 aa).

An N-terminal signal peptide occupies residues 1–29 (MKTIGGKVFRHAAILAACVLPLWCQPALA).

Belongs to the FlgI family. As to quaternary structure, the basal body constitutes a major portion of the flagellar organelle and consists of four rings (L,P,S, and M) mounted on a central rod.

Its subcellular location is the periplasm. The protein localises to the bacterial flagellum basal body. Its function is as follows. Assembles around the rod to form the L-ring and probably protects the motor/basal body from shearing forces during rotation. The sequence is that of Flagellar P-ring protein from Dechloromonas aromatica (strain RCB).